Here is a 157-residue protein sequence, read N- to C-terminus: Cell cycle control protein 50C (157 aa).

Residues 1-34 (MEERAQHCLSRLLDNSALKQQELPIHRLYFTARR) lie on the Cytoplasmic side of the membrane. A helical membrane pass occupies residues 35–55 (VLFVFFATGIFCLCMGIILIL). At 56 to 157 (SARSTQEIEI…LFLNQVDFSV (102 aa)) the chain is on the extracellular side. An N-linked (GlcNAc...) asparagine glycan is attached at Asn-66.

Belongs to the CDC50/LEM3 family.

The protein resides in the membrane. In Pan troglodytes (Chimpanzee), this protein is Cell cycle control protein 50C (TMEM30C).